An 88-amino-acid chain; its full sequence is MAHKKGVGSSRNGRDSQPKMLGVKRADGQFVLAGSILVRQRGTRIHPGRNVGRGGDDTLFAKVDGVVSFERSGRDKKTVSVIPVEAAL.

A disordered region spans residues 1–21; that stretch reads MAHKKGVGSSRNGRDSQPKML.

Belongs to the bacterial ribosomal protein bL27 family.

The sequence is that of Large ribosomal subunit protein bL27 from Pelotomaculum thermopropionicum (strain DSM 13744 / JCM 10971 / SI).